Consider the following 310-residue polypeptide: Manganese ABC transporter substrate-binding lipoprotein scaA (310 aa).

Residues Met-1–Ala-19 form the signal peptide. Residue Cys-20 is the site of N-palmitoyl cysteine attachment. A lipid anchor (S-diacylglycerol cysteine) is attached at Cys-20. His-68, His-140, Glu-206, and Asp-281 together coordinate Mn(2+).

This sequence belongs to the bacterial solute-binding protein 9 family. Lipoprotein receptor antigen (Lrai) subfamily. As to quaternary structure, the complex is composed of two ATP-binding proteins (ScaC), two transmembrane proteins (ScaB) and a solute-binding protein (ScaA).

The protein localises to the cell membrane. Its function is as follows. Part of ATP-binding cassette (ABC) transport system ScaABC involved in manganese import. Essential for growth under Mn(2+)-limiting conditions. Also acts as an adhesin which is involved on adherence to extracellular matrix. It is an important factor in pathogenesis and infection. In Streptococcus gordonii, this protein is Manganese ABC transporter substrate-binding lipoprotein scaA.